A 1290-amino-acid polypeptide reads, in one-letter code: Sorbin and SH3 domain-containing protein 1 (1290 aa).

Disordered stretches follow at residues 1-211 (MSSE…LSDV), 238-271 (HKLN…SKSE), and 286-313 (TLPL…KKVD). Low complexity predominate over residues 45–61 (SSSYRGTPSSSPVSPQE). Threonine 51 is subject to Phosphothreonine. Serine 55, serine 58, and serine 62 each carry phosphoserine. Residues 62–71 (SPKHESKSGL) show a composition bias toward basic and acidic residues. Composition is skewed to polar residues over residues 83–95 (LSSS…NAQP) and 123–153 (EVSS…TIVN). Positions 161 to 173 (HNRDPASERRAGE) are enriched in basic and acidic residues. A phosphoserine mark is found at aspartate 164 and aspartate 175. Threonine 179 bears the Phosphothreonine mark. A phosphoserine mark is found at serine 185, alanine 194, serine 204, serine 209, serine 254, serine 261, serine 270, and proline 288. Over residues 189 to 199 (ASERRAKDASR) the composition is skewed to basic and acidic residues. A SoHo domain is found at 202–247 (VRSAQDLSDVSTDEVGIPLRNTERSKDWYKTMFKQIHKLNRDDDSD). The segment covering 240–260 (LNRDDDSDVHSPRYSFSDDTK) has biased composition (basic and acidic residues). Basic and acidic residues predominate over residues 299–313 (SPERNDWEPLDKKVD). The residue at position 325 (tyrosine 325) is a Phosphotyrosine; by ABL1. Residues serine 345, proline 346, tyrosine 357, serine 376, and serine 407 each carry the phosphoserine modification. The tract at residues 389 to 416 (VETVNKSPSANSPQSSAVSPTPDITSEP) is disordered. Positions 392–412 (VNKSPSANSPQSSAVSPTPDI) are enriched in polar residues. Position 421 is a phosphotyrosine; by ABL1 (tyrosine 421). Phosphoserine occurs at positions 432 and 470. Disordered regions lie at residues 463–482 (LSGL…RKGG), 588–607 (YDSK…SSRR), 697–739 (SLDF…EMDG), 783–803 (VSND…PKHR), 822–841 (RKHE…SRGD), and 862–972 (PLQQ…SPRH). Threonine 475 is modified (phosphothreonine). Composition is skewed to polar residues over residues 595-606 (TMSLQEYGTSSR) and 704-722 (LSKS…SARS). Serine 969 is modified (phosphoserine). 2 consecutive SH3 domains span residues 1049 to 1108 (LEMR…LLPP) and 1123 to 1184 (LEYG…VLKR). The residue at position 1189 (threonine 1189) is a Phosphothreonine. A phosphotyrosine mark is found at tyrosine 1193 and tyrosine 1198. The span at 1198–1210 (YSSSPSRSATVSP) shows a compositional bias: low complexity. A disordered region spans residues 1198 to 1227 (YSSSPSRSATVSPQQPQAQQRRVTPDRSQP). Phosphoserine is present on residues serine 1201 and serine 1209. Residues 1211–1227 (QQPQAQQRRVTPDRSQP) show a composition bias toward polar residues. The region spanning 1229–1290 (LDLCSYQALY…PGNYVKPLYL (62 aa)) is the SH3 3 domain. Tyrosine 1238 carries the post-translational modification Phosphotyrosine; by ABL1.

In terms of assembly, interacts (via SH3 domain 2) with PXN. Interacts with the long isoform of AFDN and with VCL. AFDN and VCL bind to SORBS1 in a competitive manner and do not form a ternary complex. Interacts with ABL1, CBL, CBLB and INPPL1/SHIP2 through the third SH3 domain. Interaction with ABL1 occurs only after insulin stimulation while this has no effect on the interaction with INPPL1. Interacts with the insulin receptor but dissociates from it following insulin stimulation. Also interacts with SCA7, PTK2/FAK1 and flotillin. Interacts (via third SH3 domain) with the Ten-1 ICD form of TENM1; the interaction induces the translocation of SORBS1 to the nucleus. Interacts with INSM1. Post-translationally, O-glycosylated. Expressed in all tissues tested: heart, brain, spleen, lung, liver, muscle, kidney and testis. Expressed in 3T3-L1 adipocytes but not in 3T3-L1 fibroblasts.

The protein resides in the cell junction. It is found in the adherens junction. Its subcellular location is the cell membrane. The protein localises to the cytoplasm. It localises to the cytoskeleton. The protein resides in the focal adhesion. It is found in the nucleus. Its subcellular location is the nucleus matrix. Its function is as follows. Plays a role in tyrosine phosphorylation of CBL by linking CBL to the insulin receptor. Required for insulin-stimulated glucose transport. Involved in formation of actin stress fibers and focal adhesions. The protein is Sorbin and SH3 domain-containing protein 1 of Mus musculus (Mouse).